The chain runs to 1004 residues: Hyaluronate lyase HylB (1004 aa).

The first 29 residues, 1–29, serve as a signal peptide directing secretion; sequence MKNRKIWVMLVGLFTALTNGFMGTTLTFA. Catalysis depends on residues His468, Tyr477, and Arg531.

This sequence belongs to the polysaccharide lyase 8 family.

The protein localises to the secreted. The catalysed reaction is [hyaluronan](n) = n 3-(4-deoxy-beta-D-gluc-4-enuronosyl)-N-acetyl-D-glucosamine + H2O. The enzyme catalyses Eliminative degradation of polysaccharides containing 1,4-beta-D-hexosaminyl and 1,3-beta-D-glucuronosyl linkages to disaccharides containing 4-deoxy-beta-D-gluc-4-enuronosyl groups.. Degrades hyaluronic acid (HA) and chondroitin sulfate (CS) A in vitro. Is not active against heparin sodium salt (HS). Involved in the pathogenesis of vancomycin-resistant E.faecalis infections. Contributes to attenuation of the lipopolysaccharide (LPS)-mediated nuclear factor (NF)-kappa-B activation assayed in the mouse RAW-Blue reporter macrophages. The sequence is that of Hyaluronate lyase HylB from Enterococcus faecalis (strain ATCC 700802 / V583).